Reading from the N-terminus, the 356-residue chain is Carminomycin 4-O-methyltransferase DnrK (356 aa).

Residue Arg-153 participates in S-adenosyl-L-methionine binding. Asp-163 contacts substrate. S-adenosyl-L-methionine-binding positions include Gly-187, Glu-210, 237-238, and Ser-252; that span reads DF. Substrate-binding residues include Asn-257 and Arg-303.

Belongs to the class I-like SAM-binding methyltransferase superfamily. Cation-independent O-methyltransferase family. As to quaternary structure, homodimer and homotetramer in equilibrium.

The enzyme catalyses carminomycin + S-adenosyl-L-methionine = daunorubicin + S-adenosyl-L-homocysteine + H(+). It functions in the pathway antibiotic biosynthesis; daunorubicin biosynthesis. Its pathway is antibiotic biosynthesis; carminomycin biosynthesis. Its function is as follows. Involved in the biosynthesis of the anthracyclines carminomycin and daunorubicin (daunomycin) which are aromatic polyketide antibiotics that exhibit high cytotoxicity and are widely applied in the chemotherapy of a variety of cancers. In vivo, catalyzes the transfer of a methyl group from S-adenosyl-L-methionine to the 4-O-position of carminomycin to form daunorubicin. In vitro, it also methylates the anthracyclines rhodomycin D (10-carbomethoxy-13-deoxycarminomycin) and 13-deoxy-carminomycin at the 4-hydroxyl position. It is quite specific with respect to the length of the carbohydrate chain at the C7 position, but it can accept substrates with bulky substituent at C10 position. This Streptomyces peucetius protein is Carminomycin 4-O-methyltransferase DnrK (dnrK).